A 154-amino-acid polypeptide reads, in one-letter code: Ubiquitin-like protein 4A (154 aa).

Residues methionine 1–glutamate 76 enclose the Ubiquitin-like domain.

As to quaternary structure, component of the bag6/bat3 complex.

Its subcellular location is the cytoplasm. The protein localises to the cytosol. It localises to the nucleus. In terms of biological role, as part of a cytosolic protein quality control complex, the bag6/bat3 complex, maintains misfolded and hydrophobic patches-containing proteins in a soluble state and participates in their proper delivery to the endoplasmic reticulum or alternatively can promote their sorting to the proteasome where they undergo degradation. The bag6/bat3 complex is involved in the post-translational delivery of tail-anchored/type II transmembrane proteins to the endoplasmic reticulum membrane. Similarly, the bag6/bat3 complex also functions as a sorting platform for proteins of the secretory pathway that are mislocalized to the cytosol either delivering them to the proteasome for degradation or to the endoplasmic reticulum. The bag6/bat3 complex also plays a role in the endoplasmic reticulum-associated degradation (ERAD), a quality control mechanism that eliminates unwanted proteins of the endoplasmic reticulum through their retrotranslocation to the cytosol and their targeting to the proteasome. It maintains these retrotranslocated proteins in an unfolded yet soluble state condition in the cytosol to ensure their proper delivery to the proteasome. The sequence is that of Ubiquitin-like protein 4A (ubl4a) from Esox lucius (Northern pike).